We begin with the raw amino-acid sequence, 444 residues long: MVSKSAALVSLGCAKNLVDSESMVSQLIELGYEMTPEVSQAALILVNTCGFLESAVRESIDTVLQLAGYKASGSCEKLVVAGCMVQRYGKKLLGLLPEVDLFLGTSHCHALKSFIRDHEAGSSERLRIAFPDHVDNGADRHLVEGRSSAYVKIAEGCGNRCAFCLIPRLRGPYRSRRAVDILREAHRLVACGAKELNIVAQDTTAFGSDRGEEHALVSLLESLEEIEKLEWVRLLYAYPDRITPELIRTMSQSRKVVPYLDIPLQHCVPRILASMGRSGTDPERIVDAIRSGIPGVALRTSLIVGFPGETEADFQALTAFVECTGFEHLGVFAFSPEPGTRAARMPDRVPPDVAQERRKVLLELQRGISRRRLESLVGRVLPVLVEGFHPETDLLLTGRLAVQAPEADGTVLITDGIGTPGEIMRCRVTAAHDYDVEAELLSAS.

Residues Lys-4–Ala-120 enclose the MTTase N-terminal domain. Cys-13, Cys-49, Cys-83, Cys-157, Cys-161, and Cys-164 together coordinate [4Fe-4S] cluster. The 229-residue stretch at Val-143 to Arg-371 folds into the Radical SAM core domain. One can recognise a TRAM domain in the interval Glu-374–Ser-442.

The protein belongs to the methylthiotransferase family. RimO subfamily. [4Fe-4S] cluster serves as cofactor.

The protein resides in the cytoplasm. It carries out the reaction L-aspartate(89)-[ribosomal protein uS12]-hydrogen + (sulfur carrier)-SH + AH2 + 2 S-adenosyl-L-methionine = 3-methylsulfanyl-L-aspartate(89)-[ribosomal protein uS12]-hydrogen + (sulfur carrier)-H + 5'-deoxyadenosine + L-methionine + A + S-adenosyl-L-homocysteine + 2 H(+). In terms of biological role, catalyzes the methylthiolation of an aspartic acid residue of ribosomal protein uS12. The sequence is that of Ribosomal protein uS12 methylthiotransferase RimO from Syntrophobacter fumaroxidans (strain DSM 10017 / MPOB).